Consider the following 248-residue polypeptide: 5'-nucleotidase SurE (248 aa).

Aspartate 8, aspartate 9, serine 39, and asparagine 91 together coordinate a divalent metal cation.

It belongs to the SurE nucleotidase family. A divalent metal cation is required as a cofactor.

It localises to the cytoplasm. It carries out the reaction a ribonucleoside 5'-phosphate + H2O = a ribonucleoside + phosphate. In terms of biological role, nucleotidase that shows phosphatase activity on nucleoside 5'-monophosphates. This is 5'-nucleotidase SurE from Neisseria meningitidis serogroup C / serotype 2a (strain ATCC 700532 / DSM 15464 / FAM18).